The sequence spans 200 residues: Histone chaperone asf1a-B (200 aa).

Belongs to the ASF1 family. Interacts with histone H3 (including both histone H3.1 and H3.3) and histone H4.

The protein localises to the nucleus. In terms of biological role, histone chaperone that facilitates histone deposition and histone exchange and removal during nucleosome assembly and disassembly. This Xenopus laevis (African clawed frog) protein is Histone chaperone asf1a-B (asf1ab).